Reading from the N-terminus, the 382-residue chain is Bifunctional enzyme IspD/IspF (382 aa).

Positions 1–226 are 2-C-methyl-D-erythritol 4-phosphate cytidylyltransferase; the sequence is MTLAVLIVAA…RSTMDNIPDI (226 aa). Positions 227–382 are 2-C-methyl-D-erythritol 2,4-cyclodiphosphate synthase; sequence RLGNGYDVHR…ALATATLVRA (156 aa). A divalent metal cation contacts are provided by Asp233 and His235. Residues 233-235 and 259-260 each bind 4-CDP-2-C-methyl-D-erythritol 2-phosphate; these read DVH and HS. A divalent metal cation is bound at residue His267. 4-CDP-2-C-methyl-D-erythritol 2-phosphate is bound by residues 281–283, 357–360, Phe364, and Arg367; these read DIG and TTSE.

It in the N-terminal section; belongs to the IspD/TarI cytidylyltransferase family. IspD subfamily. The protein in the C-terminal section; belongs to the IspF family. It depends on a divalent metal cation as a cofactor.

It carries out the reaction 2-C-methyl-D-erythritol 4-phosphate + CTP + H(+) = 4-CDP-2-C-methyl-D-erythritol + diphosphate. The enzyme catalyses 4-CDP-2-C-methyl-D-erythritol 2-phosphate = 2-C-methyl-D-erythritol 2,4-cyclic diphosphate + CMP. It functions in the pathway isoprenoid biosynthesis; isopentenyl diphosphate biosynthesis via DXP pathway; isopentenyl diphosphate from 1-deoxy-D-xylulose 5-phosphate: step 2/6. It participates in isoprenoid biosynthesis; isopentenyl diphosphate biosynthesis via DXP pathway; isopentenyl diphosphate from 1-deoxy-D-xylulose 5-phosphate: step 4/6. In terms of biological role, bifunctional enzyme that catalyzes the formation of 4-diphosphocytidyl-2-C-methyl-D-erythritol from CTP and 2-C-methyl-D-erythritol 4-phosphate (MEP) (IspD), and catalyzes the conversion of 4-diphosphocytidyl-2-C-methyl-D-erythritol 2-phosphate (CDP-ME2P) to 2-C-methyl-D-erythritol 2,4-cyclodiphosphate (ME-CPP) with a corresponding release of cytidine 5-monophosphate (CMP) (IspF). The protein is Bifunctional enzyme IspD/IspF of Ruegeria sp. (strain TM1040) (Silicibacter sp.).